A 314-amino-acid polypeptide reads, in one-letter code: Aromatic prenyltransferase (314 aa).

The protein belongs to the aromatic prenyltransferase family.

Its function is as follows. Prenyltransferase that attaches isoprenoid moieties to carbon atoms of aromatic substrates in an enzyme-catalyzed Friedel-Crafts reaction. This is Aromatic prenyltransferase from Arthroderma otae (strain ATCC MYA-4605 / CBS 113480) (Microsporum canis).